Consider the following 213-residue polypeptide: Uridine kinase (213 aa).

Position 14–21 (glycine 14–serine 21) interacts with ATP.

Belongs to the uridine kinase family.

It is found in the cytoplasm. The catalysed reaction is uridine + ATP = UMP + ADP + H(+). It carries out the reaction cytidine + ATP = CMP + ADP + H(+). It functions in the pathway pyrimidine metabolism; CTP biosynthesis via salvage pathway; CTP from cytidine: step 1/3. Its pathway is pyrimidine metabolism; UMP biosynthesis via salvage pathway; UMP from uridine: step 1/1. The polypeptide is Uridine kinase (Vibrio atlanticus (strain LGP32) (Vibrio splendidus (strain Mel32))).